The sequence spans 149 residues: Ribose-5-phosphate isomerase B (149 aa).

9 to 10 (DH) provides a ligand contact to D-ribulose 5-phosphate. C66 (proton acceptor) is an active-site residue. Residue 67–71 (GTGVG) coordinates D-ribulose 5-phosphate. H99 functions as the Proton donor in the catalytic mechanism. Residues N100, R110, R133, and R137 each coordinate D-ribulose 5-phosphate.

The protein belongs to the LacAB/RpiB family. Homodimer, and homotetramer.

It carries out the reaction aldehydo-D-ribose 5-phosphate = D-ribulose 5-phosphate. It catalyses the reaction D-allose 6-phosphate = D-allulose 6-phosphate. The protein operates within carbohydrate degradation; pentose phosphate pathway; D-ribose 5-phosphate from D-ribulose 5-phosphate (non-oxidative stage): step 1/1. Inhibited by iodoacetate and glucose 6-phosphate. Catalyzes the interconversion of ribulose-5-P and ribose-5-P. It probably also has activity on D-allose 6-phosphate. In Escherichia coli (strain K12), this protein is Ribose-5-phosphate isomerase B.